The sequence spans 101 residues: Apolipoprotein C-II (101 aa).

Residues 1 to 22 form the signal peptide; that stretch reads MGTRCLLVLLLVLLVLRCDVQG. The propeptide at 23–28 is removed in mature form; it reads DDMARQ. The lipid binding stretch occupies residues 66–74; it reads AVDEKIRDM. The interval 78–101 is lipoprotein lipase cofactor; that stretch reads STAAVRIYTGILTDQILSMLSGDS.

This sequence belongs to the apolipoprotein C2 family. Post-translationally, proapolipoprotein C-II is synthesized as a sialic acid containing glycoprotein which is subsequently desialylated prior to its proteolytic processing. In terms of processing, proapolipoprotein C-II, the major form found in plasma undergoes proteolytic cleavage of its N-terminal hexapeptide to generate the mature form apolipoprotein C-II, which occurs as the minor form in plasma.

Its subcellular location is the secreted. Its function is as follows. Component of chylomicrons, very low-density lipoproteins (VLDL), low-density lipoproteins (LDL), and high-density lipoproteins (HDL) in plasma. Plays an important role in lipoprotein metabolism as an activator of lipoprotein lipase, the enzyme which hydrolyzes the triacylglycerols on chylomicrons and VLDL. The polypeptide is Apolipoprotein C-II (APOC2) (Acinonyx jubatus (Cheetah)).